A 750-amino-acid chain; its full sequence is Putative tyrosine-protein kinase EpsB (750 aa).

The Cytoplasmic portion of the chain corresponds to 1-31 (MTQNLPQPPAVNAPENELDLVRYLDVLVANR). The helical transmembrane segment at 32-52 (WLIAGIAAAVMLLGAAYAFLA) threads the bilayer. The Periplasmic portion of the chain corresponds to 53-444 (RPVYEADIMV…VPEEPVKPKK (392 aa)). Residues 445–465 (LTVTPLAGVLGVVLGVMAAFV) traverse the membrane as a helical segment. Over 466–750 (RNALFGGITD…NSKPPEAESA (285 aa)) the chain is Cytoplasmic.

The protein belongs to the etk/wzc family.

Its subcellular location is the cell inner membrane. The catalysed reaction is L-tyrosyl-[protein] + ATP = O-phospho-L-tyrosyl-[protein] + ADP + H(+). Functionally, probably involved in polymerization and/or export of exopolysaccharide EPS I which functions as a virulence factor. May be involved in an ATP-dependent process in the pathway for EPS I production, possibly export of the trimeric repeat units across the inner membrane or their polymerization. This is Putative tyrosine-protein kinase EpsB (epsB) from Ralstonia solanacearum (Pseudomonas solanacearum).